The sequence spans 545 residues: Thermosome subunit alpha (545 aa).

Residues 522 to 545 (KKSTPPSGQGGQGQGMPGGGMPEY) are disordered. Residues 529-545 (GQGGQGQGMPGGGMPEY) show a composition bias toward gly residues.

Belongs to the TCP-1 chaperonin family. Forms a Heterooligomeric complex of two stacked eight-membered rings. In terms of processing, the N-terminus is blocked.

Functionally, molecular chaperone; binds unfolded polypeptides in vitro, and has a weak ATPase activity. This is Thermosome subunit alpha (thsA) from Thermoplasma acidophilum (strain ATCC 25905 / DSM 1728 / JCM 9062 / NBRC 15155 / AMRC-C165).